The primary structure comprises 192 residues: MIDNLIKKEFLAHKEALEKSLEGLQEALKQSVHLLIETLENQGKILICGNGGSASDAQHFAAELTGRYKLERKGLSAISLNTDISALTAIANDYGYEEVFARQVEALGVKNDVLIGISTSGNSKNVLKAYEKAKDLEMKTLSLAGRDGGKMKPLSDMALIVPSDDTPRIQEMHILMIHILCDCIERHFAHKN.

Positions 35 to 192 (LIETLENQGK…CIERHFAHKN (158 aa)) constitute an SIS domain. 50–52 (NGG) lines the substrate pocket. Zn(2+) is bound by residues His-59 and Glu-63. Residues Glu-63, 92–93 (ND), 118–120 (STS), Ser-123, and Gln-170 contribute to the substrate site. Zn(2+) contacts are provided by Gln-170 and His-178.

This sequence belongs to the SIS family. GmhA subfamily. In terms of assembly, homotetramer. Zn(2+) serves as cofactor.

The protein localises to the cytoplasm. The catalysed reaction is 2 D-sedoheptulose 7-phosphate = D-glycero-alpha-D-manno-heptose 7-phosphate + D-glycero-beta-D-manno-heptose 7-phosphate. Its pathway is carbohydrate biosynthesis; D-glycero-D-manno-heptose 7-phosphate biosynthesis; D-glycero-alpha-D-manno-heptose 7-phosphate and D-glycero-beta-D-manno-heptose 7-phosphate from sedoheptulose 7-phosphate: step 1/1. It functions in the pathway bacterial outer membrane biogenesis; LPS core biosynthesis. Functionally, catalyzes the isomerization of sedoheptulose 7-phosphate in D-glycero-D-manno-heptose 7-phosphate. The protein is Phosphoheptose isomerase of Helicobacter pylori (strain ATCC 700392 / 26695) (Campylobacter pylori).